The sequence spans 255 residues: D-aminoacyl-tRNA deacylase (255 aa).

The protein belongs to the DtdA deacylase family. In terms of assembly, monomer. The cofactor is Zn(2+).

The catalysed reaction is a D-aminoacyl-tRNA + H2O = a tRNA + a D-alpha-amino acid + H(+). The enzyme catalyses glycyl-tRNA(Ala) + H2O = tRNA(Ala) + glycine + H(+). D-aminoacyl-tRNA deacylase with broad substrate specificity. By recycling D-aminoacyl-tRNA to D-amino acids and free tRNA molecules, this enzyme counteracts the toxicity associated with the formation of D-aminoacyl-tRNA entities in vivo. In Picrophilus torridus (strain ATCC 700027 / DSM 9790 / JCM 10055 / NBRC 100828 / KAW 2/3), this protein is D-aminoacyl-tRNA deacylase.